Consider the following 114-residue polypeptide: Large ribosomal subunit protein uL18 (114 aa).

Belongs to the universal ribosomal protein uL18 family. In terms of assembly, part of the 50S ribosomal subunit; part of the 5S rRNA/L5/L18/L25 subcomplex. Contacts the 5S and 23S rRNAs.

In terms of biological role, this is one of the proteins that bind and probably mediate the attachment of the 5S RNA into the large ribosomal subunit, where it forms part of the central protuberance. In Parabacteroides distasonis (strain ATCC 8503 / DSM 20701 / CIP 104284 / JCM 5825 / NCTC 11152), this protein is Large ribosomal subunit protein uL18.